Reading from the N-terminus, the 752-residue chain is DNA ligase (752 aa).

The segment at 1 to 25 (MKRNGFVPSNSVGRRGIPSNSTSSA) is disordered. NAD(+)-binding positions include 91–95 (DADFD), 140–141 (SL), and Glu170. The active-site N6-AMP-lysine intermediate is the Lys172. NAD(+) contacts are provided by Arg193, Glu233, Lys350, and Lys374. Positions 474, 477, 493, and 499 each coordinate Zn(2+). Positions 669 to 752 (STPRTLAGLT…TLLDGGPAAL (84 aa)) constitute a BRCT domain.

Belongs to the NAD-dependent DNA ligase family. LigA subfamily. Mg(2+) is required as a cofactor. The cofactor is Mn(2+).

The catalysed reaction is NAD(+) + (deoxyribonucleotide)n-3'-hydroxyl + 5'-phospho-(deoxyribonucleotide)m = (deoxyribonucleotide)n+m + AMP + beta-nicotinamide D-nucleotide.. Its function is as follows. DNA ligase that catalyzes the formation of phosphodiester linkages between 5'-phosphoryl and 3'-hydroxyl groups in double-stranded DNA using NAD as a coenzyme and as the energy source for the reaction. It is essential for DNA replication and repair of damaged DNA. This Nocardioides sp. (strain ATCC BAA-499 / JS614) protein is DNA ligase.